Here is a 475-residue protein sequence, read N- to C-terminus: 7-dehydrocholesterol reductase (475 aa).

The segment at 1–21 is disordered; the sequence is MAAKSQPNIPKAKSLDGVTND. Ser-14 carries the post-translational modification Phosphoserine. 6 consecutive transmembrane segments (helical) span residues 40–60, 154–174, 177–197, 266–286, 306–326, and 331–351; these read LASV…FIMA, THLL…TIIF, WIPL…FAMV, VTNA…DFFW, LGWG…LYLV, and QLST…YYIF. Residues Lys-358, Arg-362, Leu-395, Trp-400, and 407 to 408 contribute to the NADP(+) site; that span reads NY. The helical transmembrane segment at 420-440 threads the bilayer; that stretch reads LACGGGHLLPYFYIIYMAILL. NADP(+) contacts are provided by residues Asp-447, 451–455, and Tyr-462; that span reads CASKY.

Belongs to the ERG4/ERG24 family. In terms of assembly, interacts with DHCR24; this interaction regulates DHCR7 activity. Interacts with TMEM147. Widely expressed. Most abundant in adrenal gland, liver, testis, and brain.

It localises to the endoplasmic reticulum membrane. It catalyses the reaction cholesterol + NADP(+) = 7-dehydrocholesterol + NADPH + H(+). It carries out the reaction 7-dehydrodesmosterol + NADPH + H(+) = desmosterol + NADP(+). The catalysed reaction is 5,6alpha-epoxy-5alpha-cholestan-3beta-ol + H2O = 5alpha-cholestane-3beta,5,6beta-triol. The enzyme catalyses 5,6beta-epoxy-5beta-cholestan-3beta-ol + H2O = 5alpha-cholestane-3beta,5,6beta-triol. It functions in the pathway steroid biosynthesis; cholesterol biosynthesis. Its activity is regulated as follows. 7-DHC reductase and cholesterol-5,6-epoxide hydrolase (ChEH) activities are inhibited by tamoxifen and the selective AEBS ligand (4-benzyl-phenoxy)-ethyl-N-pyrrolidine (PBPE). ChEH activity is inhibited by oleic acid. Functionally, oxidoreductase that catalyzes the last step of the cholesterol synthesis pathway, which transforms cholesta-5,7-dien-3beta-ol (7-dehydrocholesterol,7-DHC) into cholesterol by reducing the C7-C8 double bond of its sterol core. Can also metabolize cholesta-5,7,24-trien-3beta-ol (7-dehydrodemosterol, 7-DHD) to desmosterol, which is then metabolized by the Delta(24)-sterol reductase (DHCR24) to cholesterol. Modulates ferroptosis (a form of regulated cell death driven by iron-dependent lipid peroxidation) through the metabolic breakdown of the anti-ferroptotic metabolites 7-DHC and 7-DHD which, when accumulated, divert the propagation of peroxyl radical-mediated damage from phospholipid components to its sterol core, protecting plasma and mitochondrial membranes from phospholipid autoxidation. In terms of biological role, component of the microsomal antiestrogen binding site (AEBS), a multiproteic complex at the ER membrane that consists of an association between cholestenol Delta-isomerase/EBP and DHCR7. This complex is responsible for cholesterol-5,6-epoxide hydrolase (ChEH) activity, which consists in the hydration of cholesterol-5,6-epoxides (5,6-EC) into cholestane-3beta,5alpha,6beta-triol (CT). The precise role of each component of this complex has not been described yet. This is 7-dehydrocholesterol reductase from Homo sapiens (Human).